Reading from the N-terminus, the 148-residue chain is MFGISFSELLLVGLVALLVLGPERLPGAARTAGLWVGRLKRSFNAIKQEVEREIGADEIRRQLHNEHILSLEQEARKIFTPVQQEPTPVEHVGEQTIHSPAAPTPAAPAVAPTESAPVVAPASVEHVAQTAAPTTPAPNDTTQPPRAP.

The helical transmembrane segment at 1-21 (MFGISFSELLLVGLVALLVLG) threads the bilayer. The tract at residues 85 to 148 (EPTPVEHVGE…NDTTQPPRAP (64 aa)) is disordered. The segment covering 107–148 (APAVAPTESAPVVAPASVEHVAQTAAPTTPAPNDTTQPPRAP) has biased composition (low complexity).

This sequence belongs to the TatB family. The Tat system comprises two distinct complexes: a TatABC complex, containing multiple copies of TatA, TatB and TatC subunits, and a separate TatA complex, containing only TatA subunits. Substrates initially bind to the TatABC complex, which probably triggers association of the separate TatA complex to form the active translocon.

It localises to the cell inner membrane. In terms of biological role, part of the twin-arginine translocation (Tat) system that transports large folded proteins containing a characteristic twin-arginine motif in their signal peptide across membranes. Together with TatC, TatB is part of a receptor directly interacting with Tat signal peptides. TatB may form an oligomeric binding site that transiently accommodates folded Tat precursor proteins before their translocation. This is Sec-independent protein translocase protein TatB from Pseudomonas fluorescens (strain Pf0-1).